The following is a 103-amino-acid chain: Large ribosomal subunit protein bL21 (103 aa).

Belongs to the bacterial ribosomal protein bL21 family. As to quaternary structure, part of the 50S ribosomal subunit. Contacts protein L20.

Its function is as follows. This protein binds to 23S rRNA in the presence of protein L20. The chain is Large ribosomal subunit protein bL21 from Salmonella paratyphi A (strain ATCC 9150 / SARB42).